Here is a 409-residue protein sequence, read N- to C-terminus: Astacin-like metalloendopeptidase (409 aa).

Residues 1 to 19 (MDLKMLLIFTAFLLPAVLG) form the signal peptide. Residues 20–86 (FPIQDNYENS…EGDIVPRRSR (67 aa)) constitute a propeptide that is removed on maturation. Over residues 30 to 42 (TATSESTQVTTEE) the composition is skewed to low complexity. The segment at 30–55 (TATSESTQVTTEESIYDSPSPTETDS) is disordered. The Peptidase M12A domain occupies 87 to 285 (SAFNCRNCYW…AKINKLYNCS (199 aa)). 5 disulfide bridges follow: C91–C94, C134–C284, C155–C175, C287–C313, and C339–C362. H183 is a Zn(2+) binding site. E184 is a catalytic residue. Positions 187 and 193 each coordinate Zn(2+). The CUB domain occupies 287–399 (CSTIIDAAFG…SGFQATFTSA (113 aa)).

Requires Zn(2+) as cofactor.

It is found in the cytoplasm. The protein localises to the cell membrane. Its subcellular location is the cytoplasmic vesicle. It localises to the secretory vesicle. The protein resides in the cortical granule. Functionally, probable oocyte-specific oolemmal receptor involved in sperm and egg adhesion and fertilization. Protease which may play a role in the breaking down of the vitelline membrane (days 0-5) and possibly, in the digestion of the egg white (days 9-12). This Coturnix japonica (Japanese quail) protein is Astacin-like metalloendopeptidase.